The following is a 607-amino-acid chain: Large ribosomal subunit assembly factor BipA (607 aa).

In terms of domain architecture, tr-type G spans 3-198; the sequence is EKLRNIAIIA…AIVDHVPAPD (196 aa). Residues 15–20 and 128–131 contribute to the GTP site; these read DHGKTT and NKVD.

This sequence belongs to the TRAFAC class translation factor GTPase superfamily. Classic translation factor GTPase family. BipA subfamily. In terms of assembly, monomer.

It is found in the cytoplasm. It catalyses the reaction GTP + H2O = GDP + phosphate + H(+). Functionally, a 50S ribosomal subunit assembly protein with GTPase activity, required for 50S subunit assembly at low temperatures, may also play a role in translation. Binds GTP and analogs. Binds the 70S ribosome between the 30S and 50S subunits, in a similar position as ribosome-bound EF-G; it contacts a number of ribosomal proteins, both rRNAs and the A-site tRNA. The sequence is that of Large ribosomal subunit assembly factor BipA from Shigella flexneri.